Consider the following 975-residue polypeptide: Protein cramped (975 aa).

5 disordered regions span residues 1 to 37 (MEEL…GGGA), 71 to 111 (QKMK…GSGK), 318 to 346 (AIFP…PSVA), 403 to 450 (PVAA…LMKM), and 809 to 844 (PIDR…QEPG). The segment covering 7–20 (QPPPPPPLPPPPSS) has biased composition (pro residues). The segment covering 86 to 98 (SEREPNKKEEKAA) has biased composition (basic and acidic residues). Positions 100–111 (KTPSQLKTGSGK) are enriched in polar residues. Residues 109 to 173 (SGKTTWTNVE…HYYQTYHKIC (65 aa)) enclose the SANT domain. A compositionally biased stretch (basic and acidic residues) spans 410 to 425 (LRTESGSEKRSPETKK). Positions 815 to 833 (GTSSGGISSSGSKPDSSMG) are enriched in low complexity.

It belongs to the cramped family.

The protein localises to the nucleus. Functionally, polycomb group (Pc-G) genes are needed to maintain expression patterns of the homeotic selector genes of the Antennapedia (Antp-C) and Bithorax (Bx-C) complexes, and hence for the maintenance of segmental determination. Can act as a modifier of position effect variegation (PEV). The chain is Protein cramped (crm) from Drosophila sechellia (Fruit fly).